The sequence spans 304 residues: Acetyl-coenzyme A carboxylase carboxyl transferase subunit beta (304 aa).

Residues 29–298 (LWTKCVSCAA…QAYRPSPQAS (270 aa)) enclose the CoA carboxyltransferase N-terminal domain. Positions 33, 36, 52, and 55 each coordinate Zn(2+). The segment at 33–55 (CVSCAALHYTKDFQLNLCVCPAC) adopts a C4-type zinc-finger fold.

It belongs to the AccD/PCCB family. In terms of assembly, acetyl-CoA carboxylase is a heterohexamer composed of biotin carboxyl carrier protein (AccB), biotin carboxylase (AccC) and two subunits each of ACCase subunit alpha (AccA) and ACCase subunit beta (AccD). Zn(2+) serves as cofactor.

The protein localises to the cytoplasm. It carries out the reaction N(6)-carboxybiotinyl-L-lysyl-[protein] + acetyl-CoA = N(6)-biotinyl-L-lysyl-[protein] + malonyl-CoA. It functions in the pathway lipid metabolism; malonyl-CoA biosynthesis; malonyl-CoA from acetyl-CoA: step 1/1. Functionally, component of the acetyl coenzyme A carboxylase (ACC) complex. Biotin carboxylase (BC) catalyzes the carboxylation of biotin on its carrier protein (BCCP) and then the CO(2) group is transferred by the transcarboxylase to acetyl-CoA to form malonyl-CoA. The polypeptide is Acetyl-coenzyme A carboxylase carboxyl transferase subunit beta (Gloeobacter violaceus (strain ATCC 29082 / PCC 7421)).